Reading from the N-terminus, the 1416-residue chain is Tiny macrocysts protein B (1416 aa).

The next 8 helical transmembrane spans lie at 47 to 67, 93 to 113, 140 to 160, 185 to 205, 231 to 251, 253 to 273, 285 to 305, and 315 to 335; these read ILTI…GFKH, FGYL…ILGF, FVSF…LIGL, ANLP…IVAF, VTVL…DFVP, LTSI…IIVL, SGFY…MGIN, and ITIV…MFYF. A compositionally biased stretch (basic and acidic residues) spans 356 to 372; that stretch reads LKDANKKGKRNSVEKES. Disordered regions lie at residues 356–377 and 662–691; these read LKDA…PTSK and IEKS…RRGK. 2 helical membrane-spanning segments follow: residues 706 to 726 and 953 to 973; these read WLMI…LVVF and AILY…AVLF. 2 disordered regions span residues 1018 to 1103 and 1119 to 1144; these read RDNL…RPLM and NVRL…ATRT. Positions 1024-1039 are enriched in acidic residues; it reads TTDDDGRDDHLGEDDN. Composition is skewed to low complexity over residues 1048 to 1062 and 1083 to 1094; these read NNNN…NNNN and SSSGSNVLNTSS. Basic and acidic residues predominate over residues 1123 to 1144; it reads QAKDEEITNGGGERKGSDATRT. Helical transmembrane passes span 1179 to 1199, 1325 to 1345, and 1358 to 1378; these read ILAT…TFTV, WFLA…FTYF, and VLTA…VVLF.

It is found in the membrane. Regulator of the cAMP signaling pathway specific to sexual development. Controls the levels of external cAMP by regulating the expression of phosphodiesterase pdsA and its inhibitor pdiA. The sequence is that of Tiny macrocysts protein B (tmcB) from Dictyostelium discoideum (Social amoeba).